The primary structure comprises 92 residues: Small ribosomal subunit protein uS19 (92 aa).

It belongs to the universal ribosomal protein uS19 family.

Its function is as follows. Protein S19 forms a complex with S13 that binds strongly to the 16S ribosomal RNA. The polypeptide is Small ribosomal subunit protein uS19 (Agrobacterium fabrum (strain C58 / ATCC 33970) (Agrobacterium tumefaciens (strain C58))).